The primary structure comprises 134 residues: Small ribosomal subunit protein uS11 (134 aa).

A disordered region spans residues 115 to 134; sequence TPIPHNGTRPPKKVLKRDLK. Basic residues predominate over residues 124 to 134; it reads PPKKVLKRDLK.

This sequence belongs to the universal ribosomal protein uS11 family. In terms of assembly, part of the 30S ribosomal subunit. Interacts with proteins S7 and S18. Binds to IF-3.

In terms of biological role, located on the platform of the 30S subunit, it bridges several disparate RNA helices of the 16S rRNA. Forms part of the Shine-Dalgarno cleft in the 70S ribosome. The sequence is that of Small ribosomal subunit protein uS11 from Mycoplasma mobile (strain ATCC 43663 / 163K / NCTC 11711) (Mesomycoplasma mobile).